The following is a 403-amino-acid chain: Flavohemoprotein (403 aa).

Residues 1–138 (MLTPEQKAIV…LADLMIGIEK (138 aa)) enclose the Globin domain. Residue H85 coordinates heme b. Active-site charge relay system residues include Y95 and E137. A reductase region spans residues 149-403 (GGWRDFRPFR…SQSFAPVILG (255 aa)). In terms of domain architecture, FAD-binding FR-type spans 152-257 (RDFRPFRVAR…HVPAGDFVLQ (106 aa)). FAD contacts are provided by residues Y190 and 206-209 (RQYS). 269–274 (GVGITP) is a binding site for NADP(+). 390-393 (TFGP) contributes to the FAD binding site.

This sequence belongs to the globin family. Two-domain flavohemoproteins subfamily. It in the C-terminal section; belongs to the flavoprotein pyridine nucleotide cytochrome reductase family. Requires heme b as cofactor. The cofactor is FAD.

It catalyses the reaction 2 nitric oxide + NADPH + 2 O2 = 2 nitrate + NADP(+) + H(+). The catalysed reaction is 2 nitric oxide + NADH + 2 O2 = 2 nitrate + NAD(+) + H(+). The protein is Flavohemoprotein of Deinococcus radiodurans (strain ATCC 13939 / DSM 20539 / JCM 16871 / CCUG 27074 / LMG 4051 / NBRC 15346 / NCIMB 9279 / VKM B-1422 / R1).